An 83-amino-acid chain; its full sequence is Weak neurotoxin WNTX33 (83 aa).

Positions 1–21 (MKTLLLTLVVVTIVCLDLGYS) are cleaved as a signal peptide. 4 disulfide bridges follow: C24–C45, C38–C62, C64–C75, and C76–C81.

It belongs to the three-finger toxin family. Short-chain subfamily. In terms of tissue distribution, expressed by the venom gland.

Its subcellular location is the secreted. This Ophiophagus hannah (King cobra) protein is Weak neurotoxin WNTX33.